The primary structure comprises 57 residues: MTTLIYLQIPVPEPIPGDPVPVPDPIPRPQPMPDPPPDEEPIKLSHRERRSARIRAC.

The segment at 7-57 (LQIPVPEPIPGDPVPVPDPIPRPQPMPDPPPDEEPIKLSHRERRSARIRAC) is disordered. Over residues 11–35 (VPEPIPGDPVPVPDPIPRPQPMPDP) the composition is skewed to pro residues. The segment covering 46–57 (HRERRSARIRAC) has biased composition (basic residues).

The sequence is that of Protein YnaL from Escherichia coli (strain K12).